A 423-amino-acid polypeptide reads, in one-letter code: Serine--tRNA ligase (423 aa).

231 to 233 (TGE) contributes to the L-serine binding site. An ATP-binding site is contributed by 262–264 (RSE). Position 285 (Glu285) interacts with L-serine. 349–352 (EISS) is a binding site for ATP. Ser385 is an L-serine binding site.

This sequence belongs to the class-II aminoacyl-tRNA synthetase family. Type-1 seryl-tRNA synthetase subfamily. Homodimer. The tRNA molecule binds across the dimer.

The protein resides in the cytoplasm. It catalyses the reaction tRNA(Ser) + L-serine + ATP = L-seryl-tRNA(Ser) + AMP + diphosphate + H(+). It carries out the reaction tRNA(Sec) + L-serine + ATP = L-seryl-tRNA(Sec) + AMP + diphosphate + H(+). It participates in aminoacyl-tRNA biosynthesis; selenocysteinyl-tRNA(Sec) biosynthesis; L-seryl-tRNA(Sec) from L-serine and tRNA(Sec): step 1/1. Catalyzes the attachment of serine to tRNA(Ser). Is also able to aminoacylate tRNA(Sec) with serine, to form the misacylated tRNA L-seryl-tRNA(Sec), which will be further converted into selenocysteinyl-tRNA(Sec). The protein is Serine--tRNA ligase of Coxiella burnetii (strain CbuG_Q212) (Coxiella burnetii (strain Q212)).